The primary structure comprises 395 residues: Teichoic acid D-alanyltransferase (395 aa).

Topologically, residues 1–6 (MTPYSS) are extracellular. A helical transmembrane segment spans residues 7-26 (FLFFILLGILLLPTIILGLN). Residues 27–30 (GKRF) are Cytoplasmic-facing. A helical transmembrane segment spans residues 31 to 46 (QAYNMFISIIILALIF). Residues 47–50 (SHDL) lie on the Extracellular side of the membrane. A helical transmembrane segment spans residues 51 to 76 (HGVIALCLFTIWQVLLISGYLAYRQK). At 77 to 79 (ANS) the chain is on the cytoplasmic side. A helical transmembrane segment spans residues 80–104 (GFVFCGAVIASILPLFLSKIWPFLS). The Extracellular segment spans residues 105–120 (HPQPHHPPHNLISFLG). Residues 121–137 (ISYLTFKGVQLIMEARD) traverse the membrane as a helical segment. The Cytoplasmic segment spans residues 138 to 145 (GLLKEQLP). Residues 146-175 (LHRLLYFILFFPTISSGPIDRYRRFVKDEQ) lie within the membrane without spanning it. At 176–179 (KAWT) the chain is on the cytoplasmic side. Residues 180 to 223 (KEEYADLLYTGIHKIFIGFLYKFIIGYAINTYFIMNLPAITHNK) traverse the membrane as a helical segment. Ile224 is a topological domain (extracellular). Residues 225–256 (LGNLLYMYGYSMYLFFDFAGYTMFAVGVSYIM) form a helical membrane-spanning segment. Residues 257–266 (GIKSPENFNK) lie on the Cytoplasmic side of the membrane. Residues 267–303 (PFISKNIKDFWNRWHMSLSFWFRDYVFMRFVFWMTKK) lie within the membrane without spanning it. Residues 304 to 308 (KWIKN) lie on the Cytoplasmic side of the membrane. Residues 309–328 (RMAVSNIGYFLLFMLMGVWH) traverse the membrane as a helical segment. His328 is a catalytic residue. Residues 329–333 (GLAPQ) are Extracellular-facing. A helical membrane pass occupies residues 334–351 (YIIYGLYHAVLMTCYNFF). Over 352–364 (EKWNKKYKWLPSN) the chain is Cytoplasmic. The helical transmembrane segment at 365–387 (RWTTILAIVITFHFVCFGFYIFS) threads the bilayer. The Extracellular portion of the chain corresponds to 388-395 (GKPFHHHH).

This sequence belongs to the membrane-bound acyltransferase family.

Its subcellular location is the cell membrane. It participates in cell wall biogenesis; lipoteichoic acid biosynthesis. O-acyltransferase that catalyzes D-alanylation of both teichoic acid and lipoteichoic acid (LTA). D-alanylation of LTA plays an important role in modulating the properties of the cell wall in Gram-positive bacteria, influencing the net charge of the cell wall. Catalyzes D-alanylation from DltC carrier protein. In Bacillus subtilis (strain 168), this protein is Teichoic acid D-alanyltransferase.